The primary structure comprises 833 residues: Leucine--tRNA ligase (833 aa).

Residues proline 41–histidine 52 carry the 'HIGH' region motif. A 'KMSKS' region motif is present at residues lysine 610–serine 614. Lysine 613 serves as a coordination point for ATP.

This sequence belongs to the class-I aminoacyl-tRNA synthetase family.

Its subcellular location is the cytoplasm. It catalyses the reaction tRNA(Leu) + L-leucine + ATP = L-leucyl-tRNA(Leu) + AMP + diphosphate. The polypeptide is Leucine--tRNA ligase (Streptococcus suis (strain 05ZYH33)).